The chain runs to 1070 residues: Carbamoyl phosphate synthase large chain (1070 aa).

Residues 1 to 401 (MPKRDDIKTI…ALLKAVRSLE (401 aa)) form a carboxyphosphate synthetic domain region. ATP is bound by residues Arg129, Arg169, Gly175, Gly176, Lys208, Ile210, Glu215, Gly241, Ile242, His243, Gln284, and Glu298. The 195-residue stretch at 133 to 327 (RDLMNELGEP…IAKLAAKIAV (195 aa)) folds into the ATP-grasp 1 domain. Mg(2+) is bound by residues Gln284, Glu298, and Asn300. The Mn(2+) site is built by Gln284, Glu298, and Asn300. The oligomerization domain stretch occupies residues 402–546 (VGADHLLLEE…YSTYEEENES (145 aa)). The tract at residues 547-929 (TRSAKESVIV…ALYKGFVASG (383 aa)) is carbamoyl phosphate synthetic domain. The ATP-grasp 2 domain maps to 671 to 861 (EKALEILQIP…MANVATRVIL (191 aa)). Residues Arg707, Arg746, Val748, Glu752, Gly777, Val778, His779, Ser780, Gln820, and Glu832 each contribute to the ATP site. Positions 820, 832, and 834 each coordinate Mg(2+). Mn(2+)-binding residues include Gln820, Glu832, and Asn834. An MGS-like domain is found at 930-1070 (TTMHDYGTVL…SEVKQPKVRV (141 aa)). Positions 930 to 1070 (TTMHDYGTVL…SEVKQPKVRV (141 aa)) are allosteric domain.

The protein belongs to the CarB family. As to quaternary structure, composed of two chains; the small (or glutamine) chain promotes the hydrolysis of glutamine to ammonia, which is used by the large (or ammonia) chain to synthesize carbamoyl phosphate. Tetramer of heterodimers (alpha,beta)4. Mg(2+) serves as cofactor. Mn(2+) is required as a cofactor.

The enzyme catalyses hydrogencarbonate + L-glutamine + 2 ATP + H2O = carbamoyl phosphate + L-glutamate + 2 ADP + phosphate + 2 H(+). It carries out the reaction hydrogencarbonate + NH4(+) + 2 ATP = carbamoyl phosphate + 2 ADP + phosphate + 2 H(+). It functions in the pathway amino-acid biosynthesis; L-arginine biosynthesis; carbamoyl phosphate from bicarbonate: step 1/1. It participates in pyrimidine metabolism; UMP biosynthesis via de novo pathway; (S)-dihydroorotate from bicarbonate: step 1/3. Large subunit of the glutamine-dependent carbamoyl phosphate synthetase (CPSase). CPSase catalyzes the formation of carbamoyl phosphate from the ammonia moiety of glutamine, carbonate, and phosphate donated by ATP, constituting the first step of 2 biosynthetic pathways, one leading to arginine and/or urea and the other to pyrimidine nucleotides. The large subunit (synthetase) binds the substrates ammonia (free or transferred from glutamine from the small subunit), hydrogencarbonate and ATP and carries out an ATP-coupled ligase reaction, activating hydrogencarbonate by forming carboxy phosphate which reacts with ammonia to form carbamoyl phosphate. The chain is Carbamoyl phosphate synthase large chain from Listeria welshimeri serovar 6b (strain ATCC 35897 / DSM 20650 / CCUG 15529 / CIP 8149 / NCTC 11857 / SLCC 5334 / V8).